Reading from the N-terminus, the 100-residue chain is Aspartyl/glutamyl-tRNA(Asn/Gln) amidotransferase subunit C (100 aa).

This sequence belongs to the GatC family. As to quaternary structure, heterotrimer of A, B and C subunits.

It catalyses the reaction L-glutamyl-tRNA(Gln) + L-glutamine + ATP + H2O = L-glutaminyl-tRNA(Gln) + L-glutamate + ADP + phosphate + H(+). The enzyme catalyses L-aspartyl-tRNA(Asn) + L-glutamine + ATP + H2O = L-asparaginyl-tRNA(Asn) + L-glutamate + ADP + phosphate + 2 H(+). Its function is as follows. Allows the formation of correctly charged Asn-tRNA(Asn) or Gln-tRNA(Gln) through the transamidation of misacylated Asp-tRNA(Asn) or Glu-tRNA(Gln) in organisms which lack either or both of asparaginyl-tRNA or glutaminyl-tRNA synthetases. The reaction takes place in the presence of glutamine and ATP through an activated phospho-Asp-tRNA(Asn) or phospho-Glu-tRNA(Gln). This chain is Aspartyl/glutamyl-tRNA(Asn/Gln) amidotransferase subunit C, found in Streptococcus pneumoniae (strain P1031).